The primary structure comprises 467 residues: GTPase Der (467 aa).

EngA-type G domains are found at residues P25 to P188 and R199 to E372. GTP-binding positions include G31–S38, D78–W82, N140–D143, G205–S212, D252–L256, and N317–D320. Residues T373–K455 enclose the KH-like domain.

The protein belongs to the TRAFAC class TrmE-Era-EngA-EngB-Septin-like GTPase superfamily. EngA (Der) GTPase family. Associates with the 50S ribosomal subunit.

Functionally, GTPase that plays an essential role in the late steps of ribosome biogenesis. This is GTPase Der from Salinispora arenicola (strain CNS-205).